The chain runs to 178 residues: Large ribosomal subunit protein uL10 (178 aa).

This sequence belongs to the universal ribosomal protein uL10 family. As to quaternary structure, part of the ribosomal stalk of the 50S ribosomal subunit. The N-terminus interacts with L11 and the large rRNA to form the base of the stalk. The C-terminus forms an elongated spine to which L12 dimers bind in a sequential fashion forming a multimeric L10(L12)X complex.

Functionally, forms part of the ribosomal stalk, playing a central role in the interaction of the ribosome with GTP-bound translation factors. The chain is Large ribosomal subunit protein uL10 from Dictyoglomus turgidum (strain DSM 6724 / Z-1310).